The following is a 70-amino-acid chain: Putative membrane protein insertion efficiency factor (70 aa).

The protein belongs to the UPF0161 family.

It localises to the cell inner membrane. Functionally, could be involved in insertion of integral membrane proteins into the membrane. This Geobacter sp. (strain M21) protein is Putative membrane protein insertion efficiency factor.